Reading from the N-terminus, the 358-residue chain is NADH-quinone oxidoreductase subunit H (358 aa).

A run of 8 helical transmembrane segments spans residues 30–50, 96–116, 129–149, 168–188, 201–221, 265–285, 297–317, and 336–356; these read VVIG…LIYM, FLYN…FSCL, VGVF…LLAG, IISY…LMGT, GWFI…YLIA, FIVA…LHIV, IPGF…LMWI, and YLVP…VFGL.

This sequence belongs to the complex I subunit 1 family. As to quaternary structure, NDH-1 is composed of 14 different subunits. Subunits NuoA, H, J, K, L, M, N constitute the membrane sector of the complex.

The protein localises to the cell inner membrane. The catalysed reaction is a quinone + NADH + 5 H(+)(in) = a quinol + NAD(+) + 4 H(+)(out). Its function is as follows. NDH-1 shuttles electrons from NADH, via FMN and iron-sulfur (Fe-S) centers, to quinones in the respiratory chain. The immediate electron acceptor for the enzyme in this species is believed to be ubiquinone. Couples the redox reaction to proton translocation (for every two electrons transferred, four hydrogen ions are translocated across the cytoplasmic membrane), and thus conserves the redox energy in a proton gradient. This subunit may bind ubiquinone. This is NADH-quinone oxidoreductase subunit H from Bacteroides fragilis (strain ATCC 25285 / DSM 2151 / CCUG 4856 / JCM 11019 / LMG 10263 / NCTC 9343 / Onslow / VPI 2553 / EN-2).